A 740-amino-acid polypeptide reads, in one-letter code: Catalase-peroxidase (740 aa).

Positions 107–229 (WHAAGTYRIH…LAAVQMGLIY (123 aa)) form a cross-link, tryptophyl-tyrosyl-methioninium (Trp-Tyr) (with M-255). His108 acts as the Proton acceptor in catalysis. A cross-link (tryptophyl-tyrosyl-methioninium (Tyr-Met) (with W-107)) is located at residues 229-255 (YVNPEGPNGNPDPMAAAVDIRETFRRM). His270 provides a ligand contact to heme b.

This sequence belongs to the peroxidase family. Peroxidase/catalase subfamily. As to quaternary structure, homodimer. It depends on heme b as a cofactor. Post-translationally, formation of the three residue Trp-Tyr-Met cross-link is important for the catalase, but not the peroxidase activity of the enzyme.

It catalyses the reaction H2O2 + AH2 = A + 2 H2O. It carries out the reaction 2 H2O2 = O2 + 2 H2O. In terms of biological role, bifunctional enzyme with both catalase and broad-spectrum peroxidase activity. May play a role in the intracellular survival of mycobacteria. The polypeptide is Catalase-peroxidase (Mycobacterium bovis (strain ATCC BAA-935 / AF2122/97)).